Here is a 262-residue protein sequence, read N- to C-terminus: tRNA pseudouridine synthase A (262 aa).

Catalysis depends on Asp54, which acts as the Nucleophile. Tyr113 provides a ligand contact to substrate.

This sequence belongs to the tRNA pseudouridine synthase TruA family. In terms of assembly, homodimer.

It carries out the reaction uridine(38/39/40) in tRNA = pseudouridine(38/39/40) in tRNA. In terms of biological role, formation of pseudouridine at positions 38, 39 and 40 in the anticodon stem and loop of transfer RNAs. The protein is tRNA pseudouridine synthase A of Lactobacillus delbrueckii subsp. bulgaricus (strain ATCC BAA-365 / Lb-18).